Reading from the N-terminus, the 403-residue chain is Aurora kinase A (403 aa).

Residues 1 to 125 (MDRSKENCIS…SKQKNEESKK (125 aa)) form a disordered region. 2 stretches are compositionally biased toward polar residues: residues 27 to 83 (VTQQ…QATS) and 91 to 101 (PLNNTQKSKQP). 2 positions are modified to phosphoserine: serine 41 and serine 51. Residues 114-125 (LASKQKNEESKK) are compositionally biased toward basic and acidic residues. One can recognise a Protein kinase domain in the interval 133–383 (FEIGRPLGKG…LREVLEHPWI (251 aa)). ATP-binding positions include lysine 143, lysine 162, and 211–213 (EYA). The Proton acceptor role is filled by aspartate 256. Lysine 258 is covalently cross-linked (Glycyl lysine isopeptide (Lys-Gly) (interchain with G-Cter in SUMO2)). ATP is bound by residues 260 to 261 (EN) and aspartate 274. The tract at residues 280–293 (HAPSSRRTTLCGTL) is activation segment. 2 positions are modified to phosphothreonine: threonine 287 and threonine 288. Position 342 is a phosphoserine; by PKA and PAK (serine 342).

This sequence belongs to the protein kinase superfamily. Ser/Thr protein kinase family. Aurora subfamily. As to quaternary structure, part of a complex composed of NEDD9, AURKA and CTTN; within the complex NEDD9 acts as a scaffold protein and is required for complex formation. Identified in a complex with AUNIP and NIN. Interacts with FBXL7. Interacts with CPEB1, JTB, TACC1, TPX2, PPP2CA, as well as with the protein phosphatase type 1 (PP1) isoforms PPP1CA, PPP1CB and PPP1CC. Also interacts with its substrates ARHGEF2, BORA, KIF2A, PARD3, and p53/TP53. Interaction with BORA promotes phosphorylation of PLK1. Interacts with CIMAP3. Interacts with GADD45A, competing with its oligomerization. Interacts (via C-terminus) with AUNIP (via C-terminus). Interacts with FRY; this interaction facilitates AURKA-mediated PLK1 phosphorylation. Interacts with SIRT2. Interacts with MYCN; interaction is phospho-independent and triggers AURKA activation; AURKA competes with FBXW7 for binding to unphosphorylated MYCN but not for binding to phosphorylated MYCN. Interacts with HNRNPU. Interacts with AAAS. Interacts with KLHL18 and CUL3. Interacts with FOXP1. Interacts with HDAC6; AURKA-mediated phosphorylation of HDAC6 promotes deacetylation of alpha-tubulin. In terms of processing, activated by phosphorylation at Thr-288; this brings about a change in the conformation of the activation segment. Phosphorylation at Thr-288 varies during the cell cycle and is highest during M phase. Autophosphorylated at Thr-288 upon TPX2 binding. Thr-288 can be phosphorylated by several kinases, including PAK and PKA. Protein phosphatase type 1 (PP1) binds AURKA and inhibits its activity by dephosphorylating Thr-288 during mitosis. Phosphorylation at Ser-342 decreases the kinase activity. PPP2CA controls degradation by dephosphorylating Ser-51 at the end of mitosis. Post-translationally, ubiquitinated by the E3 ubiquitin-protein ligase complex SCF(FBXL7) during mitosis, leading to its degradation by the proteasome. Ubiquitinated by CHFR, leading to its degradation by the proteasome. Ubiquitinated by the anaphase-promoting complex (APC), leading to its degradation by the proteasome. Ubiquitinated by the CUL3-KLHL18 ligase leading to its activation at the centrosome which is required for initiating mitotic entry. Ubiquitination mediated by CUL3-KLHL18 ligase does not lead to its degradation by the proteasome. In terms of tissue distribution, highly expressed in testis and weakly in skeletal muscle, thymus and spleen. Also highly expressed in colon, ovarian, prostate, neuroblastoma, breast and cervical cancer cell lines.

It is found in the cytoplasm. Its subcellular location is the cytoskeleton. It localises to the microtubule organizing center. The protein resides in the centrosome. The protein localises to the spindle pole. It is found in the centriole. Its subcellular location is the cell projection. It localises to the neuron projection. The protein resides in the cilium. The protein localises to the cilium basal body. It is found in the basolateral cell membrane. The enzyme catalyses L-seryl-[protein] + ATP = O-phospho-L-seryl-[protein] + ADP + H(+). It carries out the reaction L-threonyl-[protein] + ATP = O-phospho-L-threonyl-[protein] + ADP + H(+). Its activity is regulated as follows. Activation of CDK1, appears to be an upstream event of AURKA activation. Phosphatase inhibitor-2 (PPP1R2) and TPX2 act also as activators. Inactivated by the G2 checkpoint. Inhibited by GADD45A and p53/TP53, and through dephosphorylation by protein phosphatase type 1 (PP1). MLN8054 is also a potent and selective inhibitor. Activated during the early phase of cilia disassembly in the presence of CIMAP3. Inhibited by the small molecule inhibitor VX-680. Functionally, mitotic serine/threonine kinase that contributes to the regulation of cell cycle progression. Associates with the centrosome and the spindle microtubules during mitosis and plays a critical role in various mitotic events including the establishment of mitotic spindle, centrosome duplication, centrosome separation as well as maturation, chromosomal alignment, spindle assembly checkpoint, and cytokinesis. Required for normal spindle positioning during mitosis and for the localization of NUMA1 and DCTN1 to the cell cortex during metaphase. Required for initial activation of CDK1 at centrosomes. Phosphorylates numerous target proteins, including ARHGEF2, BORA, BRCA1, CDC25B, DLGP5, HDAC6, KIF2A, LATS2, NDEL1, PARD3, PPP1R2, PLK1, RASSF1, TACC3, p53/TP53 and TPX2. Phosphorylates MCRS1 which is required for MCRS1-mediated kinetochore fiber assembly and mitotic progression. Regulates KIF2A tubulin depolymerase activity. Important for microtubule formation and/or stabilization. Required for normal axon formation. Plays a role in microtubule remodeling during neurite extension. Also acts as a key regulatory component of the p53/TP53 pathway, and particularly the checkpoint-response pathways critical for oncogenic transformation of cells, by phosphorylating and destabilizing p53/TP53. Phosphorylates its own inhibitors, the protein phosphatase type 1 (PP1) isoforms, to inhibit their activity. Inhibits cilia outgrowth. Required for cilia disassembly via phosphorylation of HDAC6 and subsequent deacetylation of alpha-tubulin. Regulates protein levels of the anti-apoptosis protein BIRC5 by suppressing the expression of the SCF(FBXL7) E3 ubiquitin-protein ligase substrate adapter FBXL7 through the phosphorylation of the transcription factor FOXP1. This is Aurora kinase A from Homo sapiens (Human).